Reading from the N-terminus, the 309-residue chain is Malate dehydrogenase (309 aa).

Residues Gly8 to Gly13 and Asp33 contribute to the NAD(+) site. Positions 82 and 88 each coordinate substrate. NAD(+)-binding positions include Asn95 and Val118–Asn120. 2 residues coordinate substrate: Asn120 and Arg151. His175 (proton acceptor) is an active-site residue.

The protein belongs to the LDH/MDH superfamily. MDH type 3 family.

The catalysed reaction is (S)-malate + NAD(+) = oxaloacetate + NADH + H(+). Its function is as follows. Catalyzes the reversible oxidation of malate to oxaloacetate. This is Malate dehydrogenase from Pseudomonas putida (strain ATCC 700007 / DSM 6899 / JCM 31910 / BCRC 17059 / LMG 24140 / F1).